The following is a 163-amino-acid chain: Large ribosomal subunit protein uL10 (163 aa).

Belongs to the universal ribosomal protein uL10 family. As to quaternary structure, part of the ribosomal stalk of the 50S ribosomal subunit. The N-terminus interacts with L11 and the large rRNA to form the base of the stalk. The C-terminus forms an elongated spine to which L12 dimers bind in a sequential fashion forming a multimeric L10(L12)X complex.

In terms of biological role, forms part of the ribosomal stalk, playing a central role in the interaction of the ribosome with GTP-bound translation factors. This Glaesserella parasuis serovar 5 (strain SH0165) (Haemophilus parasuis) protein is Large ribosomal subunit protein uL10.